Reading from the N-terminus, the 398-residue chain is 1,4-beta-D-glucan cellobiohydrolase CEL6C (398 aa).

Positions 1-18 (MKITSSAAALALVASAVA) are cleaved as a signal peptide. Asparagine 70 carries N-linked (GlcNAc...) asparagine glycosylation. The active site involves aspartate 125. The active-site Proton donor is the aspartate 170. Substrate is bound by residues tryptophan 218, tryptophan 318, lysine 346, and glutamate 350.

This sequence belongs to the glycosyl hydrolase 6 (cellulase B) family. Both N- and O-glycosylated.

The protein localises to the secreted. The enzyme catalyses Hydrolysis of (1-&gt;4)-beta-D-glucosidic linkages in cellulose and cellotetraose, releasing cellobiose from the non-reducing ends of the chains.. Its function is as follows. Exoglucanase that plays an important function in biomass degradation by catalyzing the hydrolysis of the non-reducing end beta-1,4-glucosidic linkages in cellulose and cellotetraose to release cellobiose. Hydrolyzes crystalline and amorphous cellulose but is inactive on hydroxyethyl cellulose, mannan, galactomannan, xyloglucan, arabinoxylan, arabinan, xylan, and pectin. This Podospora anserina (strain S / ATCC MYA-4624 / DSM 980 / FGSC 10383) (Pleurage anserina) protein is 1,4-beta-D-glucan cellobiohydrolase CEL6C.